A 143-amino-acid polypeptide reads, in one-letter code: Nucleoside diphosphate kinase (143 aa).

Lysine 11, phenylalanine 59, arginine 87, threonine 93, arginine 104, and asparagine 114 together coordinate ATP. Catalysis depends on histidine 117, which acts as the Pros-phosphohistidine intermediate.

Belongs to the NDK family. As to quaternary structure, homotetramer. The cofactor is Mg(2+).

The protein resides in the cytoplasm. The catalysed reaction is a 2'-deoxyribonucleoside 5'-diphosphate + ATP = a 2'-deoxyribonucleoside 5'-triphosphate + ADP. It carries out the reaction a ribonucleoside 5'-diphosphate + ATP = a ribonucleoside 5'-triphosphate + ADP. In terms of biological role, major role in the synthesis of nucleoside triphosphates other than ATP. The ATP gamma phosphate is transferred to the NDP beta phosphate via a ping-pong mechanism, using a phosphorylated active-site intermediate. The polypeptide is Nucleoside diphosphate kinase (Shigella boydii serotype 4 (strain Sb227)).